The chain runs to 80 residues: Kunitz-type serine protease inhibitor LmKTT-1b (80 aa).

Residues 1–21 (MKSFLLIALVLFFLFVSYASA) form the signal peptide. Residues 25–75 (CQLPSDVGKGKASFTRYYYNEEGGKCETFIYGGVGGNSNNFLTKEDCCREC) enclose the BPTI/Kunitz inhibitor domain. 3 disulfides stabilise this stretch: C25–C75, C50–C71, and C72–C80.

This sequence belongs to the venom Kunitz-type family. Scorpion delta-Ktx subfamily. Delta-Ktx 2 sub-subfamily. As to expression, expressed by the venom gland.

It localises to the secreted. In terms of biological role, serine protease inhibitor that inhibits trypsin at a molar ratio of 1:1 (Ki=160 nM). Is thermostable. The chain is Kunitz-type serine protease inhibitor LmKTT-1b from Lychas mucronatus (Chinese swimming scorpion).